Reading from the N-terminus, the 186-residue chain is Peptidyl-tRNA hydrolase (186 aa).

Y14 contributes to the tRNA binding site. The active-site Proton acceptor is the H19. 3 residues coordinate tRNA: F65, N67, and N113.

Belongs to the PTH family. In terms of assembly, monomer.

The protein resides in the cytoplasm. The catalysed reaction is an N-acyl-L-alpha-aminoacyl-tRNA + H2O = an N-acyl-L-amino acid + a tRNA + H(+). In terms of biological role, hydrolyzes ribosome-free peptidyl-tRNAs (with 1 or more amino acids incorporated), which drop off the ribosome during protein synthesis, or as a result of ribosome stalling. Its function is as follows. Catalyzes the release of premature peptidyl moieties from peptidyl-tRNA molecules trapped in stalled 50S ribosomal subunits, and thus maintains levels of free tRNAs and 50S ribosomes. The sequence is that of Peptidyl-tRNA hydrolase from Limosilactobacillus fermentum (strain NBRC 3956 / LMG 18251) (Lactobacillus fermentum).